Reading from the N-terminus, the 115-residue chain is Large ribosomal subunit protein uL18 (115 aa).

The tract at residues Met1 to Gly24 is disordered. Over residues Leu10–Gly20 the composition is skewed to basic residues.

This sequence belongs to the universal ribosomal protein uL18 family. As to quaternary structure, part of the 50S ribosomal subunit; part of the 5S rRNA/L5/L18/L25 subcomplex. Contacts the 5S and 23S rRNAs.

Functionally, this is one of the proteins that bind and probably mediate the attachment of the 5S RNA into the large ribosomal subunit, where it forms part of the central protuberance. The protein is Large ribosomal subunit protein uL18 of Lactococcus lactis subsp. cremoris (strain MG1363).